Consider the following 92-residue polypeptide: Cell division topological specificity factor (92 aa).

The protein belongs to the MinE family.

Its function is as follows. Prevents the cell division inhibition by proteins MinC and MinD at internal division sites while permitting inhibition at polar sites. This ensures cell division at the proper site by restricting the formation of a division septum at the midpoint of the long axis of the cell. The chain is Cell division topological specificity factor from Syntrophobacter fumaroxidans (strain DSM 10017 / MPOB).